A 765-amino-acid chain; its full sequence is MSLQLLKALPHLRSATTAVRTQIARTTWSEHIATKVFFSTTTTKPTPSAPPPPPPTQPQQPAATTSWGTKKQNRKVKLRSAAAEFIMSNPEIEAQLAPLRERVQEQGNLVRDLKAKGAPEIDVKKAVAELKARKKLLEDKELALTPSVVSFDRAKMEDLLKRRFFYDQSFAIYGGITGQYDFGPMGCALKSNILALWRQYFALEEQMLEVDCSILTPEPVLKASGHVERFADLMVKDVKTGECFRLDHLIKQALEKLSKAKDATPALQAECEDIIIKLDGLNKQELAGVLAKYNIKSPLTGNDLTEPIEFNLMFATQIGPTGLVKGFLRPETAQGIFVNFKRLLEFNQGKLPFAVAQIGNSFRNEISPRSGLIRVREFTMAEIEHFCDPVLKDHPKFGNIKSEKLTLYSACNQMDGKSAAQVQIGEAVASKLVANETLGYYMARIQQFLLAIGIKPECLRFRQHMSNEMAHYACDCWDAEILTSYGWVECVGCADRSAYDLGQHTAATGVRLVAEKRLPAPKTVEVSEIVPNKQALGKTFKKEAKNITDALAKLSLEEITKVEEQLAGDGQYKLTTADGQSHDLGKDTISVKHSTKTVHVEEFIPSVVEPSFGIGRIMYSLLEHSFQCRDGDEQRCYFTLPPLVAPIKCSILPLSNNTDFQPYTQKLSSALTKAELSHKVDDSSGSIGRRYARTDEIAIPYGITVDFDTLKEPHTVTLRDRNTMKQVRVGLEEVVGVVKDLSTARTTWESVTEQYPLFEQQEASK.

The N-terminal 87 residues, 1-87 (MSLQLLKALP…LRSAAAEFIM (87 aa)), are a transit peptide targeting the mitochondrion. Residues 41-73 (TTTKPTPSAPPPPPPTQPQQPAATTSWGTKKQN) are disordered. The segment covering 47 to 58 (PSAPPPPPPTQP) has biased composition (pro residues). The WHEP-TRS domain occupies 95–151 (QLAPLRERVQEQGNLVRDLKAKGAPEIDVKKAVAELKARKKLLEDKELALTPSVVSF). Glutamate 331 provides a ligand contact to glycine. ATP is bound by residues 363 to 365 (RNE) and 374 to 375 (RV). Position 382 (glutamate 382) interacts with glycine. 489–490 (EC) is an ATP binding site. 609 to 611 (EPS) provides a ligand contact to glycine. Arginine 616 serves as a coordination point for ATP.

It belongs to the class-II aminoacyl-tRNA synthetase family. In terms of assembly, homodimer.

It is found in the mitochondrion. It localises to the cytoplasm. The protein localises to the cell projection. The protein resides in the axon. It carries out the reaction 2 ATP + H(+) = P(1),P(4)-bis(5'-adenosyl) tetraphosphate + diphosphate. It catalyses the reaction tRNA(Gly) + glycine + ATP = glycyl-tRNA(Gly) + AMP + diphosphate. In terms of biological role, catalyzes the ATP-dependent ligation of glycine to the 3'-end of its cognate tRNA, via the formation of an aminoacyl-adenylate intermediate (Gly-AMP). Also produces diadenosine tetraphosphate (Ap4A), a universal pleiotropic signaling molecule needed for cell regulation pathways, by direct condensation of 2 ATPs. Thereby, may play a special role in Ap4A homeostasis. Required for terminal arborization of both dendrites and axons during development. The polypeptide is Glycine--tRNA ligase (Drosophila melanogaster (Fruit fly)).